A 148-amino-acid polypeptide reads, in one-letter code: Ribonuclease pancreatic (148 aa).

A signal peptide spans 1-25; the sequence is MGLEKSLLLLPLLVLVLGCVQPSLG. Residues Lys-32 and Arg-35 each coordinate substrate. The Proton acceptor role is filled by His-37. Cystine bridges form between Cys-50-Cys-108, Cys-64-Cys-119, Cys-82-Cys-134, and Cys-89-Cys-96. Substrate is bound by residues 65 to 69 and Lys-90; that span reads KPVNT. Catalysis depends on His-143, which acts as the Proton donor.

The protein belongs to the pancreatic ribonuclease family. As to quaternary structure, monomer. Interacts with and forms tight 1:1 complexes with RNH1. Dimerization of two such complexes may occur. Interaction with RNH1 inhibits this protein. Pancreas.

Its subcellular location is the secreted. It catalyses the reaction an [RNA] containing cytidine + H2O = an [RNA]-3'-cytidine-3'-phosphate + a 5'-hydroxy-ribonucleotide-3'-[RNA].. It carries out the reaction an [RNA] containing uridine + H2O = an [RNA]-3'-uridine-3'-phosphate + a 5'-hydroxy-ribonucleotide-3'-[RNA].. In terms of biological role, endonuclease that catalyzes the cleavage of RNA on the 3' side of pyrimidine nucleotides. Acts on single-stranded and double-stranded RNA. The polypeptide is Ribonuclease pancreatic (RNASE1) (Gerbillus nigeriae (Nigerian gerbil)).